A 173-amino-acid polypeptide reads, in one-letter code: Transcriptional repressor NrdR (173 aa).

A zinc finger lies at 3–34 (CPFCQHADTRVIDSRVSEDGATIRRRRECEAC). The ATP-cone domain maps to 49–139 (PAIVKSDGTR…VYRSFEDVAD (91 aa)).

Belongs to the NrdR family. It depends on Zn(2+) as a cofactor.

Its function is as follows. Negatively regulates transcription of bacterial ribonucleotide reductase nrd genes and operons by binding to NrdR-boxes. This Stenotrophomonas maltophilia (strain R551-3) protein is Transcriptional repressor NrdR.